Here is a 215-residue protein sequence, read N- to C-terminus: Triosephosphate isomerase (215 aa).

The Electrophile role is filled by H82. The active-site Proton acceptor is E153.

It belongs to the triosephosphate isomerase family. Homodimer.

The enzyme catalyses D-glyceraldehyde 3-phosphate = dihydroxyacetone phosphate. Its pathway is carbohydrate biosynthesis; gluconeogenesis. The protein operates within carbohydrate degradation; glycolysis; D-glyceraldehyde 3-phosphate from glycerone phosphate: step 1/1. The protein is Triosephosphate isomerase (Tpi) of Heliothis virescens (Tobacco budworm moth).